The chain runs to 576 residues: Zinc finger protein 791 (576 aa).

The 87-residue stretch at 4-90 (VAFKDVSVSF…AETFSPNLSV (87 aa)) folds into the KRAB domain. 17 C2H2-type zinc fingers span residues 100 to 122 (YECT…MRSH), 132 to 154 (YKCK…ERSH), 160 to 182 (YKCK…EQTH), 188 to 210 (YECK…ERIH), 216 to 238 (YECK…ERTH), 244 to 266 (YACK…MITH), 272 to 294 (YKCK…ERIH), 300 to 322 (YTCK…ERIH), 328 to 350 (YKCK…VRVH), 356 to 378 (YKCK…ERTH), 384 to 406 (YECK…KRNH), 412 to 434 (YECK…MITH), 440 to 462 (YKCR…ERTH), 468 to 490 (YECK…KRTH), 496 to 518 (YECK…MRMH), 524 to 546 (YKCK…TRIH), and 552 to 574 (LECK…MRMH).

This sequence belongs to the krueppel C2H2-type zinc-finger protein family.

The protein resides in the nucleus. May be involved in transcriptional regulation. The protein is Zinc finger protein 791 (ZNF791) of Pongo abelii (Sumatran orangutan).